A 322-amino-acid polypeptide reads, in one-letter code: uncharacterized protein (322 aa).

The segment at 1 to 63 (MFKIRKRSVP…DEASSSDSHY (63 aa)) is disordered. Basic and acidic residues predominate over residues 34-49 (FVDDHGKPIAEYRDFP). A C3H1-type zinc finger spans residues 245–274 (WKVDRICTYYINRPDKCTRGDNCRFKHDDV). The segment at 278-322 (HRQKEIQSSRNQSWHHRTSSHKYSSENSDHRGYRRHRSRSPHARQ) is disordered. Residues 309–322 (GYRRHRSRSPHARQ) are compositionally biased toward basic residues.

This is an uncharacterized protein from Caenorhabditis elegans.